The following is a 242-amino-acid chain: UDP-2,3-diacylglucosamine hydrolase (242 aa).

Mn(2+)-binding residues include aspartate 7, histidine 9, aspartate 40, asparagine 78, and histidine 113. 78–79 contacts substrate; sequence NR. The substrate site is built by aspartate 121, serine 159, threonine 163, lysine 166, and histidine 194. Residues histidine 194 and histidine 196 each coordinate Mn(2+).

It belongs to the LpxH family. The cofactor is Mn(2+).

The protein localises to the cell inner membrane. The catalysed reaction is UDP-2-N,3-O-bis[(3R)-3-hydroxytetradecanoyl]-alpha-D-glucosamine + H2O = 2-N,3-O-bis[(3R)-3-hydroxytetradecanoyl]-alpha-D-glucosaminyl 1-phosphate + UMP + 2 H(+). It functions in the pathway glycolipid biosynthesis; lipid IV(A) biosynthesis; lipid IV(A) from (3R)-3-hydroxytetradecanoyl-[acyl-carrier-protein] and UDP-N-acetyl-alpha-D-glucosamine: step 4/6. Functionally, hydrolyzes the pyrophosphate bond of UDP-2,3-diacylglucosamine to yield 2,3-diacylglucosamine 1-phosphate (lipid X) and UMP by catalyzing the attack of water at the alpha-P atom. Involved in the biosynthesis of lipid A, a phosphorylated glycolipid that anchors the lipopolysaccharide to the outer membrane of the cell. The chain is UDP-2,3-diacylglucosamine hydrolase from Ectopseudomonas mendocina (strain ymp) (Pseudomonas mendocina).